The chain runs to 1215 residues: DNA-directed RNA polymerase subunit beta' (1215 aa).

The Zn(2+) site is built by Cys-60, Cys-62, Cys-75, and Cys-78. Mg(2+) is bound by residues Asp-450, Asp-452, and Asp-454. Zn(2+) is bound by residues Cys-818, Cys-892, Cys-899, and Cys-902.

Belongs to the RNA polymerase beta' chain family. In terms of assembly, the RNAP catalytic core consists of 2 alpha, 1 beta, 1 beta' and 1 omega subunit. When a sigma factor is associated with the core the holoenzyme is formed, which can initiate transcription. Mg(2+) serves as cofactor. Zn(2+) is required as a cofactor.

It catalyses the reaction RNA(n) + a ribonucleoside 5'-triphosphate = RNA(n+1) + diphosphate. Its function is as follows. DNA-dependent RNA polymerase catalyzes the transcription of DNA into RNA using the four ribonucleoside triphosphates as substrates. This is DNA-directed RNA polymerase subunit beta' from Streptococcus sanguinis (strain SK36).